Consider the following 334-residue polypeptide: Meso-diaminopimelate D-dehydrogenase (334 aa).

Residues 16–19, 40–42, 75–78, 98–100, and 127–131 each bind NADP(+); these read YGNL, TRR, CSGS, GFD, and CGWDP. Substrate is bound by residues aspartate 100, aspartate 130, tryptophan 154, 160–161, threonine 179, arginine 205, histidine 255, and asparagine 284; that span reads QG.

This sequence belongs to the diaminopimelate dehydrogenase family. As to quaternary structure, homodimer.

The catalysed reaction is meso-2,6-diaminopimelate + NADP(+) + H2O = (S)-2-amino-6-oxoheptanedioate + NH4(+) + NADPH + H(+). It participates in amino-acid biosynthesis; L-lysine biosynthesis via DAP pathway; DL-2,6-diaminopimelate from (S)-tetrahydrodipicolinate: step 1/1. In terms of biological role, catalyzes the reversible NADPH-dependent reductive amination of L-2-amino-6-oxopimelate, the acyclic form of L-tetrahydrodipicolinate, to generate the meso compound, D,L-2,6-diaminopimelate. Probably plays a role in lysine biosynthesis. Exhibits a high substrate specificity for meso-2,6-diaminopimelate (m-DAP), since the activity with L,L-2,6-diaminopimelate is less than 5% of the activity observed with m-DAP. Can use NAD(+) only very poorly since the activity observed in the presence of NAD(+) is about 0.3% of that with NADP(+). The polypeptide is Meso-diaminopimelate D-dehydrogenase (ddh) (Acetivibrio thermocellus (strain ATCC 27405 / DSM 1237 / JCM 9322 / NBRC 103400 / NCIMB 10682 / NRRL B-4536 / VPI 7372) (Clostridium thermocellum)).